The primary structure comprises 572 residues: 2-succinyl-5-enolpyruvyl-6-hydroxy-3-cyclohexene-1-carboxylate synthase (572 aa).

The protein belongs to the TPP enzyme family. MenD subfamily. As to quaternary structure, homodimer. Mg(2+) is required as a cofactor. Requires Mn(2+) as cofactor. The cofactor is thiamine diphosphate.

It carries out the reaction isochorismate + 2-oxoglutarate + H(+) = 5-enolpyruvoyl-6-hydroxy-2-succinyl-cyclohex-3-ene-1-carboxylate + CO2. It participates in quinol/quinone metabolism; 1,4-dihydroxy-2-naphthoate biosynthesis; 1,4-dihydroxy-2-naphthoate from chorismate: step 2/7. The protein operates within quinol/quinone metabolism; menaquinone biosynthesis. Functionally, catalyzes the thiamine diphosphate-dependent decarboxylation of 2-oxoglutarate and the subsequent addition of the resulting succinic semialdehyde-thiamine pyrophosphate anion to isochorismate to yield 2-succinyl-5-enolpyruvyl-6-hydroxy-3-cyclohexene-1-carboxylate (SEPHCHC). This is 2-succinyl-5-enolpyruvyl-6-hydroxy-3-cyclohexene-1-carboxylate synthase from Shewanella amazonensis (strain ATCC BAA-1098 / SB2B).